The primary structure comprises 620 residues: Chaperone protein DnaK (620 aa).

Phosphothreonine; by autocatalysis is present on threonine 197. The tract at residues 597 to 620 (AMANKNNAEQPKKKDDDVIDAEVE) is disordered.

Belongs to the heat shock protein 70 family.

Functionally, acts as a chaperone. The polypeptide is Chaperone protein DnaK (Helicobacter acinonychis (strain Sheeba)).